Here is a 661-residue protein sequence, read N- to C-terminus: Acetyl-coenzyme A synthetase (661 aa).

CoA is bound by residues 199 to 202 and Thr-317; that span reads RGGK. ATP-binding positions include 393 to 395, 417 to 422, Asp-508, and Arg-523; these read GEP and DTFWQT. Residue Ser-531 participates in CoA binding. Arg-534 contacts ATP. CoA is bound at residue Arg-596.

Belongs to the ATP-dependent AMP-binding enzyme family.

It carries out the reaction acetate + ATP + CoA = acetyl-CoA + AMP + diphosphate. The chain is Acetyl-coenzyme A synthetase (ACS-1) from Coprinopsis cinerea (Inky cap fungus).